The primary structure comprises 498 residues: Glycerol kinase (498 aa).

Position 12 (Thr-12) interacts with ADP. Positions 12, 13, and 14 each coordinate ATP. Residue Thr-12 coordinates sn-glycerol 3-phosphate. An ADP-binding site is contributed by Arg-16. Sn-glycerol 3-phosphate-binding residues include Arg-82, Glu-83, and Tyr-134. Glycerol is bound by residues Arg-82, Glu-83, and Tyr-134. Position 230 is a phosphohistidine; by HPr (His-230). Residue Asp-244 participates in sn-glycerol 3-phosphate binding. Glycerol-binding residues include Asp-244 and Gln-245. ADP is bound by residues Thr-266 and Gly-309. Residues Thr-266, Gly-309, Gln-313, and Gly-410 each contribute to the ATP site. Gly-410 and Asn-414 together coordinate ADP.

The protein belongs to the FGGY kinase family. Homotetramer and homodimer (in equilibrium). The phosphoenolpyruvate-dependent sugar phosphotransferase system (PTS), including enzyme I, and histidine-containing protein (HPr) are required for the phosphorylation, which leads to the activation of the enzyme.

The enzyme catalyses glycerol + ATP = sn-glycerol 3-phosphate + ADP + H(+). The protein operates within polyol metabolism; glycerol degradation via glycerol kinase pathway; sn-glycerol 3-phosphate from glycerol: step 1/1. Activated by phosphorylation and inhibited by fructose 1,6-bisphosphate (FBP). Key enzyme in the regulation of glycerol uptake and metabolism. Catalyzes the phosphorylation of glycerol to yield sn-glycerol 3-phosphate. This chain is Glycerol kinase, found in Staphylococcus aureus (strain MSSA476).